A 493-amino-acid chain; its full sequence is Probable glycine dehydrogenase (decarboxylating) subunit 2 (493 aa).

Position 269 is an N6-(pyridoxal phosphate)lysine (Lys269).

Belongs to the GcvP family. C-terminal subunit subfamily. As to quaternary structure, the glycine cleavage system is composed of four proteins: P, T, L and H. In this organism, the P 'protein' is a heterodimer of two subunits. Requires pyridoxal 5'-phosphate as cofactor.

The catalysed reaction is N(6)-[(R)-lipoyl]-L-lysyl-[glycine-cleavage complex H protein] + glycine + H(+) = N(6)-[(R)-S(8)-aminomethyldihydrolipoyl]-L-lysyl-[glycine-cleavage complex H protein] + CO2. In terms of biological role, the glycine cleavage system catalyzes the degradation of glycine. The P protein binds the alpha-amino group of glycine through its pyridoxal phosphate cofactor; CO(2) is released and the remaining methylamine moiety is then transferred to the lipoamide cofactor of the H protein. The protein is Probable glycine dehydrogenase (decarboxylating) subunit 2 of Chloroherpeton thalassium (strain ATCC 35110 / GB-78).